The sequence spans 571 residues: Phosphoenolpyruvate-protein phosphotransferase (571 aa).

Catalysis depends on His-189, which acts as the Tele-phosphohistidine intermediate. The phosphoenolpyruvate site is built by Arg-296 and Arg-332. Mg(2+) contacts are provided by Glu-431 and Asp-455. Phosphoenolpyruvate is bound by residues Asn-454–Asp-455 and Arg-465. Residue Cys-502 is the Proton donor of the active site.

The protein belongs to the PEP-utilizing enzyme family. As to quaternary structure, homodimer. Mg(2+) is required as a cofactor.

The protein localises to the cytoplasm. It catalyses the reaction L-histidyl-[protein] + phosphoenolpyruvate = N(pros)-phospho-L-histidyl-[protein] + pyruvate. In terms of biological role, general (non sugar-specific) component of the phosphoenolpyruvate-dependent sugar phosphotransferase system (sugar PTS). This major carbohydrate active-transport system catalyzes the phosphorylation of incoming sugar substrates concomitantly with their translocation across the cell membrane. Enzyme I transfers the phosphoryl group from phosphoenolpyruvate (PEP) to the phosphoryl carrier protein (HPr). This is Phosphoenolpyruvate-protein phosphotransferase (ptsI) from Buchnera aphidicola subsp. Acyrthosiphon pisum (strain APS) (Acyrthosiphon pisum symbiotic bacterium).